Here is a 438-residue protein sequence, read N- to C-terminus: Cysteine--tRNA ligase (438 aa).

Cys-28 contributes to the Zn(2+) binding site. Residues 30–40 carry the 'HIGH' region motif; that stretch reads PTVYNHLHLGN. Zn(2+)-binding residues include Cys-207, His-232, and Glu-236. Positions 264 to 268 match the 'KMSKS' region motif; that stretch reads KMSKS. Residue Lys-267 participates in ATP binding.

The protein belongs to the class-I aminoacyl-tRNA synthetase family. As to quaternary structure, monomer. Requires Zn(2+) as cofactor.

The protein localises to the cytoplasm. It catalyses the reaction tRNA(Cys) + L-cysteine + ATP = L-cysteinyl-tRNA(Cys) + AMP + diphosphate. This Onion yellows phytoplasma (strain OY-M) protein is Cysteine--tRNA ligase.